A 316-amino-acid chain; its full sequence is tRNA-dihydrouridine(16) synthase (316 aa).

FMN-binding positions include 7 to 9 and Q68; that span reads PME. C98 serves as the catalytic Proton donor. FMN-binding positions include K139, 200–202, and 224–225; these read NGE and GR.

It belongs to the Dus family. DusC subfamily. It depends on FMN as a cofactor.

It carries out the reaction 5,6-dihydrouridine(16) in tRNA + NADP(+) = uridine(16) in tRNA + NADPH + H(+). The catalysed reaction is 5,6-dihydrouridine(16) in tRNA + NAD(+) = uridine(16) in tRNA + NADH + H(+). In terms of biological role, catalyzes the synthesis of 5,6-dihydrouridine (D), a modified base found in the D-loop of most tRNAs, via the reduction of the C5-C6 double bond in target uridines. Specifically modifies U16 in tRNAs. In Escherichia coli O157:H7, this protein is tRNA-dihydrouridine(16) synthase.